Consider the following 179-residue polypeptide: ATP synthase subunit delta (179 aa).

It belongs to the ATPase delta chain family. In terms of assembly, F-type ATPases have 2 components, F(1) - the catalytic core - and F(0) - the membrane proton channel. F(1) has five subunits: alpha(3), beta(3), gamma(1), delta(1), epsilon(1). F(0) has three main subunits: a(1), b(2) and c(10-14). The alpha and beta chains form an alternating ring which encloses part of the gamma chain. F(1) is attached to F(0) by a central stalk formed by the gamma and epsilon chains, while a peripheral stalk is formed by the delta and b chains.

Its subcellular location is the cell membrane. Functionally, f(1)F(0) ATP synthase produces ATP from ADP in the presence of a proton or sodium gradient. F-type ATPases consist of two structural domains, F(1) containing the extramembraneous catalytic core and F(0) containing the membrane proton channel, linked together by a central stalk and a peripheral stalk. During catalysis, ATP synthesis in the catalytic domain of F(1) is coupled via a rotary mechanism of the central stalk subunits to proton translocation. In terms of biological role, this protein is part of the stalk that links CF(0) to CF(1). It either transmits conformational changes from CF(0) to CF(1) or is implicated in proton conduction. This Staphylococcus aureus (strain bovine RF122 / ET3-1) protein is ATP synthase subunit delta.